A 464-amino-acid chain; its full sequence is Soluble pyridine nucleotide transhydrogenase (464 aa).

35–44 serves as a coordination point for FAD; the sequence is DSRRVVGGNC.

This sequence belongs to the class-I pyridine nucleotide-disulfide oxidoreductase family. It depends on FAD as a cofactor.

The protein resides in the cytoplasm. It catalyses the reaction NAD(+) + NADPH = NADH + NADP(+). Functionally, conversion of NADPH, generated by peripheral catabolic pathways, to NADH, which can enter the respiratory chain for energy generation. This is Soluble pyridine nucleotide transhydrogenase from Pseudomonas aeruginosa (strain LESB58).